The following is a 362-amino-acid chain: Histidine protein methyltransferase 1 homolog (362 aa).

The tract at residues K28 to P89 is disordered. The span at S55–D73 shows a compositional bias: polar residues. S62 and S67 each carry phosphoserine. H144 carries the post-translational modification Tele-methylhistidine. Residues I158 to T162, G185, and Q206 to Y208 each bind S-adenosyl-L-methionine. The short motif at P237–R243 is the Nuclear localization signal element. S-adenosyl-L-methionine contacts are provided by residues G259 to W261 and S283.

This sequence belongs to the methyltransferase superfamily. METTL18 family. As to quaternary structure, interacts with GRWD1 and members of the heat shock protein 90 and 70 families; these proteins may possibly be methylation substrates for the enzyme. In terms of processing, monomethylated at His-144 through automethylation. Automethylation at His-144 positively regulates the methyltransferase activity toward RPL3. Probably methylated on other residues.

It is found in the cytoplasm. The protein resides in the cytosol. The protein localises to the nucleus. It localises to the nucleolus. It catalyses the reaction L-histidyl-[protein] + S-adenosyl-L-methionine = N(tele)-methyl-L-histidyl-[protein] + S-adenosyl-L-homocysteine + H(+). Functionally, protein-L-histidine N-tele-methyltransferase that specifically monomethylates RPL3, thereby regulating translation elongation. Histidine methylation of RPL3 regulates translation elongation by slowing ribosome traversal on tyrosine codons: slower elongation provides enough time for proper folding of synthesized proteins and prevents cellular aggregation of tyrosine-rich proteins. The protein is Histidine protein methyltransferase 1 homolog of Rattus norvegicus (Rat).